A 322-amino-acid chain; its full sequence is Beta-ketoacyl-[acyl-carrier-protein] synthase III (322 aa).

Catalysis depends on residues C113 and H249. Residues 250–254 form an ACP-binding region; it reads QANLR. N279 is a catalytic residue.

The protein belongs to the thiolase-like superfamily. FabH family. As to quaternary structure, homodimer.

The protein localises to the cytoplasm. The enzyme catalyses malonyl-[ACP] + acetyl-CoA + H(+) = 3-oxobutanoyl-[ACP] + CO2 + CoA. It participates in lipid metabolism; fatty acid biosynthesis. Its function is as follows. Catalyzes the condensation reaction of fatty acid synthesis by the addition to an acyl acceptor of two carbons from malonyl-ACP. Catalyzes the first condensation reaction which initiates fatty acid synthesis and may therefore play a role in governing the total rate of fatty acid production. Possesses both acetoacetyl-ACP synthase and acetyl transacylase activities. Its substrate specificity determines the biosynthesis of branched-chain and/or straight-chain of fatty acids. This is Beta-ketoacyl-[acyl-carrier-protein] synthase III from Marinobacter nauticus (strain ATCC 700491 / DSM 11845 / VT8) (Marinobacter aquaeolei).